We begin with the raw amino-acid sequence, 745 residues long: Phosphoribosylformylglycinamidine synthase subunit PurL (745 aa).

Residue His-47 is part of the active site. ATP contacts are provided by Tyr-50 and Lys-90. Glu-92 contributes to the Mg(2+) binding site. Substrate contacts are provided by residues 93-96 (SHNH) and Arg-115. His-94 (proton acceptor) is an active-site residue. Position 116 (Asp-116) interacts with Mg(2+). Gln-240 contributes to the substrate binding site. Residue Asp-268 participates in Mg(2+) binding. Position 312–314 (312–314 (ESQ)) interacts with substrate. Residues Asn-501 and Gly-538 each coordinate ATP. Asn-539 lines the Mg(2+) pocket. Ser-541 is a binding site for substrate.

Belongs to the FGAMS family. In terms of assembly, monomer. Part of the FGAM synthase complex composed of 1 PurL, 1 PurQ and 2 PurS subunits.

Its subcellular location is the cytoplasm. It carries out the reaction N(2)-formyl-N(1)-(5-phospho-beta-D-ribosyl)glycinamide + L-glutamine + ATP + H2O = 2-formamido-N(1)-(5-O-phospho-beta-D-ribosyl)acetamidine + L-glutamate + ADP + phosphate + H(+). Its pathway is purine metabolism; IMP biosynthesis via de novo pathway; 5-amino-1-(5-phospho-D-ribosyl)imidazole from N(2)-formyl-N(1)-(5-phospho-D-ribosyl)glycinamide: step 1/2. Part of the phosphoribosylformylglycinamidine synthase complex involved in the purines biosynthetic pathway. Catalyzes the ATP-dependent conversion of formylglycinamide ribonucleotide (FGAR) and glutamine to yield formylglycinamidine ribonucleotide (FGAM) and glutamate. The FGAM synthase complex is composed of three subunits. PurQ produces an ammonia molecule by converting glutamine to glutamate. PurL transfers the ammonia molecule to FGAR to form FGAM in an ATP-dependent manner. PurS interacts with PurQ and PurL and is thought to assist in the transfer of the ammonia molecule from PurQ to PurL. This Leptospira borgpetersenii serovar Hardjo-bovis (strain JB197) protein is Phosphoribosylformylglycinamidine synthase subunit PurL.